The following is a 326-amino-acid chain: Acetyl-coenzyme A carboxylase carboxyl transferase subunit alpha (326 aa).

In terms of domain architecture, CoA carboxyltransferase C-terminal spans 44 to 298; that stretch reads QLESRAEQLR…KEALLFHLNT (255 aa).

The protein belongs to the AccA family. Acetyl-CoA carboxylase is a heterohexamer composed of biotin carboxyl carrier protein (AccB), biotin carboxylase (AccC) and two subunits each of ACCase subunit alpha (AccA) and ACCase subunit beta (AccD).

It localises to the cytoplasm. It carries out the reaction N(6)-carboxybiotinyl-L-lysyl-[protein] + acetyl-CoA = N(6)-biotinyl-L-lysyl-[protein] + malonyl-CoA. Its pathway is lipid metabolism; malonyl-CoA biosynthesis; malonyl-CoA from acetyl-CoA: step 1/1. In terms of biological role, component of the acetyl coenzyme A carboxylase (ACC) complex. First, biotin carboxylase catalyzes the carboxylation of biotin on its carrier protein (BCCP) and then the CO(2) group is transferred by the carboxyltransferase to acetyl-CoA to form malonyl-CoA. This is Acetyl-coenzyme A carboxylase carboxyl transferase subunit alpha from Synechocystis sp. (strain ATCC 27184 / PCC 6803 / Kazusa).